A 296-amino-acid chain; its full sequence is D-alanine--D-alanine ligase (296 aa).

The region spanning 103 to 293 (KEILMHHRMP…FDSFVKRIIE (191 aa)) is the ATP-grasp domain. Residue 129 to 180 (ISFPAAVKPSSGGSSIATFKVKSIQELKHAYEEASKYGEVMIEQWVTGKEIT) participates in ATP binding. Mg(2+)-binding residues include D247, E260, and N262.

It belongs to the D-alanine--D-alanine ligase family. It depends on Mg(2+) as a cofactor. The cofactor is Mn(2+).

Its subcellular location is the cytoplasm. It carries out the reaction 2 D-alanine + ATP = D-alanyl-D-alanine + ADP + phosphate + H(+). It functions in the pathway cell wall biogenesis; peptidoglycan biosynthesis. Functionally, cell wall formation. In Francisella tularensis subsp. holarctica (strain LVS), this protein is D-alanine--D-alanine ligase.